Consider the following 202-residue polypeptide: Small ribosomal subunit protein uS4c (202 aa).

Residues 90–158 enclose the S4 RNA-binding domain; the sequence is MRSDNVIFRL…ISKNIELYQK (69 aa).

Belongs to the universal ribosomal protein uS4 family. Part of the 30S ribosomal subunit. Contacts protein S5. The interaction surface between S4 and S5 is involved in control of translational fidelity.

It is found in the plastid. The protein resides in the chloroplast. Functionally, one of the primary rRNA binding proteins, it binds directly to 16S rRNA where it nucleates assembly of the body of the 30S subunit. Its function is as follows. With S5 and S12 plays an important role in translational accuracy. The sequence is that of Small ribosomal subunit protein uS4c (rps4) from Anthoceros punctatus (Hornwort).